Reading from the N-terminus, the 218-residue chain is Protein GrpE (218 aa).

A disordered region spans residues 1–78; sequence MSEFNKDDYL…DSADTLTPLG (78 aa). Positions 14–58 are enriched in low complexity; it reads PDPSDAEAAAQASSGADASAESGSAQDSAAQAPSNEGADAAPAAA.

This sequence belongs to the GrpE family. In terms of assembly, homodimer.

The protein localises to the cytoplasm. Functionally, participates actively in the response to hyperosmotic and heat shock by preventing the aggregation of stress-denatured proteins, in association with DnaK and GrpE. It is the nucleotide exchange factor for DnaK and may function as a thermosensor. Unfolded proteins bind initially to DnaJ; upon interaction with the DnaJ-bound protein, DnaK hydrolyzes its bound ATP, resulting in the formation of a stable complex. GrpE releases ADP from DnaK; ATP binding to DnaK triggers the release of the substrate protein, thus completing the reaction cycle. Several rounds of ATP-dependent interactions between DnaJ, DnaK and GrpE are required for fully efficient folding. This is Protein GrpE from Bifidobacterium longum (strain NCC 2705).